Reading from the N-terminus, the 274-residue chain is Diaminopimelate epimerase (274 aa).

3 residues coordinate substrate: Asn-11, Gln-44, and Asn-64. The active-site Proton donor is the Cys-73. Residues 74 to 75, Asn-157, Asn-190, and 208 to 209 contribute to the substrate site; these read GN and ER. Residue Cys-217 is the Proton acceptor of the active site. 218–219 serves as a coordination point for substrate; it reads GS.

This sequence belongs to the diaminopimelate epimerase family. As to quaternary structure, homodimer.

The protein resides in the cytoplasm. It carries out the reaction (2S,6S)-2,6-diaminopimelate = meso-2,6-diaminopimelate. It participates in amino-acid biosynthesis; L-lysine biosynthesis via DAP pathway; DL-2,6-diaminopimelate from LL-2,6-diaminopimelate: step 1/1. In terms of biological role, catalyzes the stereoinversion of LL-2,6-diaminopimelate (L,L-DAP) to meso-diaminopimelate (meso-DAP), a precursor of L-lysine and an essential component of the bacterial peptidoglycan. In Serratia proteamaculans (strain 568), this protein is Diaminopimelate epimerase.